The following is a 56-amino-acid chain: UPF0391 membrane protein PSHAa0537 (56 aa).

The next 2 helical transmembrane spans lie at 6 to 26 (ITFL…IAGA) and 27 to 47 (AAGI…ISLV).

It belongs to the UPF0391 family.

It localises to the cell membrane. The chain is UPF0391 membrane protein PSHAa0537 from Pseudoalteromonas translucida (strain TAC 125).